The primary structure comprises 363 residues: Spermidine/putrescine import ATP-binding protein PotA (363 aa).

One can recognise an ABC transporter domain in the interval 4–234; that stretch reads LELRNVIRRF…PANRFIADFI (231 aa). An ATP-binding site is contributed by 36 to 43; that stretch reads GPSGCGKT.

This sequence belongs to the ABC transporter superfamily. Spermidine/putrescine importer (TC 3.A.1.11.1) family. The complex is composed of two ATP-binding proteins (PotA), two transmembrane proteins (PotB and PotC) and a solute-binding protein (PotD).

It is found in the cell inner membrane. The catalysed reaction is ATP + H2O + polyamine-[polyamine-binding protein]Side 1 = ADP + phosphate + polyamineSide 2 + [polyamine-binding protein]Side 1.. Part of the ABC transporter complex PotABCD involved in spermidine/putrescine import. Responsible for energy coupling to the transport system. This chain is Spermidine/putrescine import ATP-binding protein PotA, found in Nitrosomonas eutropha (strain DSM 101675 / C91 / Nm57).